The primary structure comprises 206 residues: Imidazoleglycerol-phosphate dehydratase (206 aa).

The protein belongs to the imidazoleglycerol-phosphate dehydratase family.

It localises to the cytoplasm. The enzyme catalyses D-erythro-1-(imidazol-4-yl)glycerol 3-phosphate = 3-(imidazol-4-yl)-2-oxopropyl phosphate + H2O. It functions in the pathway amino-acid biosynthesis; L-histidine biosynthesis; L-histidine from 5-phospho-alpha-D-ribose 1-diphosphate: step 6/9. The protein is Imidazoleglycerol-phosphate dehydratase of Leptospira borgpetersenii serovar Hardjo-bovis (strain JB197).